A 467-amino-acid chain; its full sequence is Asparagine--tRNA ligase (467 aa).

The protein belongs to the class-II aminoacyl-tRNA synthetase family. Homodimer.

It localises to the cytoplasm. It catalyses the reaction tRNA(Asn) + L-asparagine + ATP = L-asparaginyl-tRNA(Asn) + AMP + diphosphate + H(+). This chain is Asparagine--tRNA ligase, found in Legionella pneumophila (strain Lens).